Here is a 276-residue protein sequence, read N- to C-terminus: NADPH-dependent 7-cyano-7-deazaguanine reductase (276 aa).

A substrate-binding site is contributed by 83 to 85; it reads IES. 85–86 lines the NADPH pocket; that stretch reads SK. Residue cysteine 184 is the Thioimide intermediate of the active site. The Proton donor role is filled by aspartate 191. Substrate is bound at residue 223–224; it reads HE. 252-253 contacts NADPH; it reads RG.

This sequence belongs to the GTP cyclohydrolase I family. QueF type 2 subfamily. In terms of assembly, homodimer.

The protein localises to the cytoplasm. The catalysed reaction is 7-aminomethyl-7-carbaguanine + 2 NADP(+) = 7-cyano-7-deazaguanine + 2 NADPH + 3 H(+). It participates in tRNA modification; tRNA-queuosine biosynthesis. In terms of biological role, catalyzes the NADPH-dependent reduction of 7-cyano-7-deazaguanine (preQ0) to 7-aminomethyl-7-deazaguanine (preQ1). This chain is NADPH-dependent 7-cyano-7-deazaguanine reductase, found in Pseudomonas fluorescens (strain Pf0-1).